A 425-amino-acid polypeptide reads, in one-letter code: UPF0597 protein UNCMA_16400 (425 aa).

This sequence belongs to the UPF0597 family.

In Methanocella arvoryzae (strain DSM 22066 / NBRC 105507 / MRE50), this protein is UPF0597 protein UNCMA_16400.